The chain runs to 105 residues: Molt-inhibiting hormone (105 aa).

The signal sequence occupies residues 1–28 (MYRLAMRTWLAIVIVVVGTSLLFDTASA). Intrachain disulfides connect cysteine 35-cysteine 72, cysteine 52-cysteine 68, and cysteine 55-cysteine 81.

The protein belongs to the arthropod CHH/MIH/GIH/VIH hormone family. As to expression, produced by the medulla terminalis X-organ in the eyestalks and transported to the sinus gland where it is stored and released.

The protein localises to the secreted. Inhibits Y-organs where molting hormone (ecdysteroid) is secreted. A molting cycle is initiated when MIH secretion diminishes or stops. Has little or no hyperglycemic activity. This is Molt-inhibiting hormone from Penaeus japonicus (Kuruma prawn).